Consider the following 306-residue polypeptide: Non-homologous end joining protein Ku 2 (306 aa).

A Ku domain is found at 21-206 (ISFGLVNIGV…EVSKQEIDMA (186 aa)). Residues 233–306 (LIDAKTKGTK…GSRDKTRKRA (74 aa)) form a disordered region. Basic residues predominate over residues 274–290 (RTSRRKTTASASRRRSS). Residues 291 to 300 (SNREKTGSRD) are compositionally biased toward basic and acidic residues.

The protein belongs to the prokaryotic Ku family. As to quaternary structure, homodimer. Interacts with LigD.

With LigD forms a non-homologous end joining (NHEJ) DNA repair enzyme, which repairs dsDNA breaks with reduced fidelity. Binds linear dsDNA with 5'- and 3'- overhangs but not closed circular dsDNA nor ssDNA. Recruits and stimulates the ligase activity of LigD. This chain is Non-homologous end joining protein Ku 2, found in Saccharopolyspora erythraea (strain ATCC 11635 / DSM 40517 / JCM 4748 / NBRC 13426 / NCIMB 8594 / NRRL 2338).